The sequence spans 450 residues: Probable glucan endo-1,3-beta-glucosidase eglC (450 aa).

A signal peptide spans 1 to 18; the sequence is MQFTHLVALALALATSEA. Catalysis depends on glutamate 128, which acts as the Proton donor. N-linked (GlcNAc...) asparagine glycosylation occurs at asparagine 183. The Nucleophile role is filled by glutamate 239. N-linked (GlcNAc...) asparagine glycosylation is found at asparagine 362 and asparagine 368. Low complexity-rich tracts occupy residues 377-395 and 405-420; these read SSAI…SGSS and ASGQ…SAPS. The segment at 377-420 is disordered; that stretch reads SSAISGSSSGSAAGSSGSSGSSGSGASGASGQSSSSTGSSSAPS. The GPI-anchor amidated asparagine moiety is linked to residue asparagine 427. The propeptide at 428–450 is removed in mature form; sequence AASGLSGSICGAVVAVCLALAAL.

The protein belongs to the glycosyl hydrolase 17 family. Post-translationally, the GPI-anchor is attached to the protein in the endoplasmic reticulum and serves to target the protein to the cell surface. There, the glucosamine-inositol phospholipid moiety is cleaved off and the GPI-modified mannoprotein is covalently attached via its lipidless GPI glycan remnant to the 1,6-beta-glucan of the outer cell wall layer.

Its subcellular location is the cell membrane. The protein localises to the secreted. The protein resides in the cell wall. It catalyses the reaction Hydrolysis of (1-&gt;3)-beta-D-glucosidic linkages in (1-&gt;3)-beta-D-glucans.. In terms of biological role, glucanases play a role in cell expansion during growth, in cell-cell fusion during mating, and in spore release during sporulation. This enzyme may be involved in beta-glucan degradation and also function biosynthetically as a transglycosylase. The chain is Probable glucan endo-1,3-beta-glucosidase eglC (eglC) from Aspergillus fumigatus (strain CBS 144.89 / FGSC A1163 / CEA10) (Neosartorya fumigata).